The primary structure comprises 331 residues: HPr kinase/phosphorylase (331 aa).

Catalysis depends on residues His153 and Lys174. ATP is bound at residue 168-175 (GKSGLGKS). Ser175 provides a ligand contact to Mg(2+). Residue Asp192 is the Proton acceptor; for phosphorylation activity. Proton donor; for dephosphorylation activity of the active site. Residues 217 to 226 (MEIRGLGVVD) form an important for the catalytic mechanism of both phosphorylation and dephosphorylation region. Glu218 is a Mg(2+) binding site. Residue Arg259 is part of the active site. An important for the catalytic mechanism of dephosphorylation region spans residues 280–285 (PIFPGK).

Belongs to the HPrK/P family. As to quaternary structure, homohexamer. Mg(2+) is required as a cofactor.

The enzyme catalyses [HPr protein]-L-serine + ATP = [HPr protein]-O-phospho-L-serine + ADP + H(+). The catalysed reaction is [HPr protein]-O-phospho-L-serine + phosphate + H(+) = [HPr protein]-L-serine + diphosphate. Its function is as follows. Catalyzes the ATP- as well as the pyrophosphate-dependent phosphorylation of a specific serine residue in HPr, a phosphocarrier protein of the phosphoenolpyruvate-dependent sugar phosphotransferase system (PTS). HprK/P also catalyzes the pyrophosphate-producing, inorganic phosphate-dependent dephosphorylation (phosphorolysis) of seryl-phosphorylated HPr (P-Ser-HPr). The sequence is that of HPr kinase/phosphorylase from Pelodictyon phaeoclathratiforme (strain DSM 5477 / BU-1).